The chain runs to 1322 residues: FERM and PDZ domain-containing protein 4 (1322 aa).

Residues 33–66 (QVPPYGWEMTANRDGRDYFINHMTQAIPFDDPRL) enclose the WW domain. The PDZ domain maps to 78-155 (KVEMRRDPVL…SILLTVIQPY (78 aa)). Residues 204–519 (NVLKVYLENG…GYYRLLVDSR (316 aa)) form the FERM domain. 7 disordered regions span residues 809–847 (APPPGFRDSSDEEDSQSQAASFPEDKEKGSSLQNDEIPV), 900–927 (SPESSSDSGNETNSSEMTESSELATAQK), 952–983 (EFPASKTPAGGLPPKSSHALAARPATDLPPKV), 1027–1080 (RKSK…STFN), 1105–1148 (SGLE…GQGD), 1160–1180 (AKDLDNPEDADSSTCDHPSKL), and 1207–1227 (HFSLQSSQGSSVDAGCGTGSS). Residues 902-921 (ESSSDSGNETNSSEMTESSE) show a composition bias toward low complexity. Positions 1041–1054 (NGNTTGKKQQGTKT) are enriched in low complexity. The span at 1067-1080 (TVSSRDSQHLSTFN) shows a compositional bias: polar residues. The segment covering 1207–1217 (HFSLQSSQGSS) has biased composition (polar residues).

As to quaternary structure, interacts (via C-terminus) with DLG1, DLG2, DLG3 and DLG4/PSD95. Interacts (via N-terminus) with ARHGEF7; the interaction is mediated by the PDZ domain. Interacts with GPSM2 (via TPR repeat region).

The protein localises to the cell projection. The protein resides in the dendritic spine. Functionally, positive regulator of dendritic spine morphogenesis and density. Required for the maintenance of excitatory synaptic transmission. Binds phosphatidylinositol 4,5-bisphosphate. In Homo sapiens (Human), this protein is FERM and PDZ domain-containing protein 4 (FRMPD4).